A 447-amino-acid chain; its full sequence is MGEDTDTRKINHSFLRDHSYVTEADVISTVEFNHTGELLATGDKGGRVVIFQREPESKNAPHSQGEYDVYSTFQSHEPEFDYLKSLEIEEKINKIKWLPQQNAAHSLLSTNDKTIKLWKITERDKRPEGYNLKDEEGKLKDLSTVTSLQVPVLKPMDLMVEVSPRRIFANGHTYHINSISVNSDCETYMSADDLRINLWHLAITDRSFNIVDIKPANMEDLTEVITASEFHPHHCNLFVYSSSKGSLRLCDMRAAALCDKHSKLFEEPEDPSNRSFFSEIISSVSDVKFSHSGRYMLTRDYLTVKVWDLNMEARPIETYQVHDYLRSKLCSLYESDCIFDKFECAWNGSDSVIMTGAYNNFFRMFDRNTKRDVTLEASRESSKPRAVLKPRRVCVGGKRRRDDISVDSLDFTKKILHTAWHPAENIIAIAATNNLYIFQDKVNSDMH.

7 WD repeats span residues T22–P61, E87–E128, G171–N209, D220–K260, E279–E317, E334–L375, and D410–M446.

It belongs to the phosphatase 2A regulatory subunit B family. As to quaternary structure, PP2A consists of a common heterodimeric core enzyme, composed of a 36 kDa catalytic subunit (subunit C) and a 65 kDa constant regulatory subunit (PR65 or subunit A), that associates with a variety of regulatory subunits. Proteins that associate with the core dimer include three families of regulatory subunits B (the R2/B/PR55/B55, R3/B''/PR72/PR130/PR59 and R5/B'/B56 families), the 48 kDa variable regulatory subunit, viral proteins, and cell signaling molecules. Interacts with IER5. In terms of tissue distribution, highly expressed in brain.

Its function is as follows. The B regulatory subunit might modulate substrate selectivity and catalytic activity, and might also direct the localization of the catalytic enzyme to a particular subcellular compartment. This chain is Serine/threonine-protein phosphatase 2A 55 kDa regulatory subunit B gamma isoform (Ppp2r2c), found in Rattus norvegicus (Rat).